A 183-amino-acid polypeptide reads, in one-letter code: Probable apo-citrate lyase phosphoribosyl-dephospho-CoA transferase (183 aa).

The protein belongs to the CitX family.

It carries out the reaction apo-[citrate lyase ACP] + 2'-(5''-triphospho-alpha-D-ribosyl)-3'-dephospho-CoA = holo-[citrate lyase ACP] + diphosphate. Its function is as follows. Transfers 2-(5''-triphosphoribosyl)-3'-dephosphocoenzyme-A on a serine residue to the apo-acyl carrier protein (gamma chain) of the citrate lyase to yield holo-acyl carrier protein. This chain is Probable apo-citrate lyase phosphoribosyl-dephospho-CoA transferase, found in Escherichia coli (strain 55989 / EAEC).